The following is a 453-amino-acid chain: Allantoinase (453 aa).

The Zn(2+) site is built by His59, His61, Lys146, His186, His242, and Asp315. At Lys146 the chain carries N6-carboxylysine.

This sequence belongs to the metallo-dependent hydrolases superfamily. Allantoinase family. Homotetramer. Zn(2+) is required as a cofactor. Carboxylation allows a single lysine to coordinate two zinc ions.

It carries out the reaction (S)-allantoin + H2O = allantoate + H(+). It participates in nitrogen metabolism; (S)-allantoin degradation; allantoate from (S)-allantoin: step 1/1. In terms of biological role, catalyzes the conversion of allantoin (5-ureidohydantoin) to allantoic acid by hydrolytic cleavage of the five-member hydantoin ring. The protein is Allantoinase of Salmonella agona (strain SL483).